A 222-amino-acid polypeptide reads, in one-letter code: Superoxide dismutase [Mn], mitochondrial (222 aa).

The transit peptide at 1 to 24 directs the protein to the mitochondrion; the sequence is MLSRGVCGTSRQLAPALGYLGSRQ. His-50 lines the Mn(2+) pocket. Position 58 is a 3'-nitrotyrosine (Tyr-58). An N6-acetyllysine; alternate mark is found at Lys-68 and Lys-75. N6-succinyllysine; alternate is present on residues Lys-68 and Lys-75. Residue His-98 coordinates Mn(2+). Residue Lys-114 is modified to N6-acetyllysine. N6-acetyllysine; alternate occurs at positions 122 and 130. An N6-succinyllysine; alternate mark is found at Lys-122 and Lys-130. Mn(2+)-binding residues include Asp-183 and His-187. An N6-acetyllysine modification is found at Lys-202.

It belongs to the iron/manganese superoxide dismutase family. In terms of assembly, homotetramer. The cofactor is Mn(2+). In terms of processing, nitrated under oxidative stress. Nitration coupled with oxidation inhibits the catalytic activity. Acetylation at Lys-122 decreases enzymatic activity. Deacetylated by SIRT3 upon exposure to ionizing radiations or after long fasting. Post-translationally, polyubiquitinated; leading to proteasomal degradation. Deubiquitinated by USP36 which increases protein stability.

The protein resides in the mitochondrion matrix. It catalyses the reaction 2 superoxide + 2 H(+) = H2O2 + O2. Destroys superoxide anion radicals which are normally produced within the cells and which are toxic to biological systems. The polypeptide is Superoxide dismutase [Mn], mitochondrial (SOD2) (Pongo pygmaeus (Bornean orangutan)).